We begin with the raw amino-acid sequence, 231 residues long: MSSYQQKQPFTPPPQPQQHQVKQPCQPPPQDTFVPITKDPCHPNVPSPGNTNIAEQGYVKIPEQGSIKVPDTGYTKIPDSGNTKVPESGCTSVPGSGYSVVPQPGYTKVPDQGYTKVPESGCTSVPGSGYSVVPQPGYTKVPESGCTSVPGPGYPTVPQPGYTKVPESGCTSVPGSGYSVIPQPSYTKVPESGCTSVPGPGYPTVPQPGYTKVQEPNPSIVTPGLSQKKTK.

Residues 1-104 (MSSYQQKQPF…GSGYSVVPQP (104 aa)) are disordered. At S2 the chain carries N-acetylserine. Tandem repeats lie at residues 55–62 (EQGYVKIP), 63–70 (EQGSIKVP), 71–78 (DTGYTKIP), 79–86 (DSGNTKVP), 87–94 (ESGCTSVP), 95–102 (GSGYSVVP), 103–110 (QPGYTKVP), 111–118 (DQGYTKVP), 119–126 (ESGCTSVP), 127–134 (GSGYSVVP), 135–142 (QPGYTKVP), 143–150 (ESGCTSVP), 151–158 (GPGYPTVP), 159–166 (QPGYTKVP), 167–174 (ESGCTSVP), 175–182 (GSGYSVIP), 183–190 (QPSYTKVP), 191–198 (ESGCTSVP), 199–206 (GPGYPTVP), 207–214 (QPGYTKVQ), and 215–222 (EPNPSIVT). The tract at residues 55-222 (EQGYVKIPEQ…VQEPNPSIVT (168 aa)) is 21 X 8 AA approximate tandem repeats. Positions 80-94 (SGNTKVPESGCTSVP) are enriched in polar residues. Positions 188 to 231 (KVPESGCTSVPGPGYPTVPQPGYTKVQEPNPSIVTPGLSQKKTK) are disordered. A compositionally biased stretch (polar residues) spans 214 to 231 (QEPNPSIVTPGLSQKKTK).

Belongs to the cornifin (SPRR) family. In terms of tissue distribution, suprabasal layers of the squamous epithelia of esophagus, tongue and oral mucosa.

It is found in the cytoplasm. Its function is as follows. Can serve as a substrate in transglutaminase-catalyzed cross linking reactions and can function as a cross-linked envelope precursor. This chain is Small proline-rich protein 3 (SPRR3), found in Oryctolagus cuniculus (Rabbit).